Here is a 411-residue protein sequence, read N- to C-terminus: Short chain dehydrogenase ausT (411 aa).

NADP(+)-binding residues include Asp105, Gln137, Tyr249, and Arg253. Catalysis depends on Tyr249, which acts as the Proton donor. Tyr263 acts as the Proton donor in catalysis.

The protein belongs to the short-chain dehydrogenases/reductases (SDR) family.

Its pathway is secondary metabolite biosynthesis; terpenoid biosynthesis. Short chain dehydrogenase; part of the gene cluster that mediates the biosynthesis of calidodehydroaustin, a fungal meroterpenoid. The first step of the pathway is the synthesis of 3,5-dimethylorsellinic acid by the polyketide synthase ausA. 3,5-dimethylorsellinic acid is then prenylated by the polyprenyl transferase ausN. Further epoxidation by the FAD-dependent monooxygenase ausM and cyclization by the probable terpene cyclase ausL lead to the formation of protoaustinoid A. Protoaustinoid A is then oxidized to spiro-lactone preaustinoid A3 by the combined action of the FAD-binding monooxygenases ausB and ausC, and the dioxygenase ausE. Acid-catalyzed keto-rearrangement and ring contraction of the tetraketide portion of preaustinoid A3 by ausJ lead to the formation of preaustinoid A4. The aldo-keto reductase ausK, with the help of ausH, is involved in the next step by transforming preaustinoid A4 into isoaustinone which is in turn hydroxylated by the P450 monooxygenase ausI to form austinolide. The cytochrome P450 monooxygenase ausG modifies austinolide to austinol. Austinol is further acetylated to austin by the O-acetyltransferase ausP, which spontaneously changes to dehydroaustin. The cytochrome P450 monooxygenase ausR then converts dehydroaustin is into 7-dehydrodehydroaustin. The hydroxylation catalyzed by ausR permits the O-acetyltransferase ausQ to add an additional acetyl group to the molecule, leading to the formation of acetoxydehydroaustin. The short chain dehydrogenase ausT catalyzes the reduction of the double bond present between carbon atoms 1 and 2 to convert 7-dehydrodehydroaustin into 1,2-dihydro-7-hydroxydehydroaustin. AusQ catalyzes not only an acetylation reaction but also the addition of the PKS ausV diketide product to 1,2-dihydro-7-hydroxydehydroaustin, forming precalidodehydroaustin. Finally, the iron/alpha-ketoglutarate-dependent dioxygenase converts precalidodehydroaustin into calidodehydroaustin. This Aspergillus calidoustus protein is Short chain dehydrogenase ausT.